Here is a 509-residue protein sequence, read N- to C-terminus: Probable cytochrome P450 513A1 (509 aa).

A helical transmembrane segment spans residues 2 to 19 (NYLVGLVLIFTIFYFFLQ). Residue Cys454 coordinates heme.

The protein belongs to the cytochrome P450 family. It depends on heme as a cofactor.

It localises to the membrane. In Dictyostelium discoideum (Social amoeba), this protein is Probable cytochrome P450 513A1 (cyp513A1).